The chain runs to 137 residues: MPTINQLVRKPRKSKTKQSDSPVLNRGFNSKKKQFTNLNSPQKRGVCTRVGTMTPRKPNSALRKYARVRLSNNIEVNAYIPGIGHNLQEHSVVLVRGGRVKDLPGVRYHIVRGALDTSGVDGRRQGRSLYGTKKPKN.

Residues 1-57 are disordered; it reads MPTINQLVRKPRKSKTKQSDSPVLNRGFNSKKKQFTNLNSPQKRGVCTRVGTMTPRK. At aspartate 102 the chain carries 3-methylthioaspartic acid. A disordered region spans residues 118 to 137; sequence SGVDGRRQGRSLYGTKKPKN.

It belongs to the universal ribosomal protein uS12 family. Part of the 30S ribosomal subunit. Contacts proteins S8 and S17. May interact with IF1 in the 30S initiation complex.

Functionally, with S4 and S5 plays an important role in translational accuracy. In terms of biological role, interacts with and stabilizes bases of the 16S rRNA that are involved in tRNA selection in the A site and with the mRNA backbone. Located at the interface of the 30S and 50S subunits, it traverses the body of the 30S subunit contacting proteins on the other side and probably holding the rRNA structure together. The combined cluster of proteins S8, S12 and S17 appears to hold together the shoulder and platform of the 30S subunit. This Staphylococcus epidermidis (strain ATCC 12228 / FDA PCI 1200) protein is Small ribosomal subunit protein uS12.